The following is a 327-amino-acid chain: tRNA dimethylallyltransferase (327 aa).

14–21 (GPTASGKT) is an ATP binding site. Position 16–21 (16–21 (TASGKT)) interacts with substrate. Interaction with substrate tRNA regions lie at residues 39–42 (DSAL) and 163–167 (QRIQR).

This sequence belongs to the IPP transferase family. In terms of assembly, monomer. The cofactor is Mg(2+).

It catalyses the reaction adenosine(37) in tRNA + dimethylallyl diphosphate = N(6)-dimethylallyladenosine(37) in tRNA + diphosphate. Catalyzes the transfer of a dimethylallyl group onto the adenine at position 37 in tRNAs that read codons beginning with uridine, leading to the formation of N6-(dimethylallyl)adenosine (i(6)A). The chain is tRNA dimethylallyltransferase from Xanthomonas oryzae pv. oryzae (strain KACC10331 / KXO85).